We begin with the raw amino-acid sequence, 238 residues long: Sugar fermentation stimulation protein homolog (238 aa).

It belongs to the SfsA family.

This is Sugar fermentation stimulation protein homolog from Pseudoalteromonas translucida (strain TAC 125).